A 582-amino-acid chain; its full sequence is Putative frv operon regulatory protein (582 aa).

The H-T-H motif DNA-binding region spans 20–39 (PGELAQQTGVSGRTILRDID). Positions 443–582 (RFFSAPGSFH…EAFMELLHKG (140 aa)) constitute a PTS EIIA type-2 domain. His-505 carries the post-translational modification Phosphohistidine; by HPr.

Functionally, could be involved in the regulation of the transcription of the FRV operon. This Escherichia coli (strain K12) protein is Putative frv operon regulatory protein (frvR).